Consider the following 541-residue polypeptide: Arginine-containing cyclodipeptide synthase avaA (541 aa).

The Conserved DDXXE motif motif lies at 428-432; the sequence is DDIAE.

The protein belongs to the arginine-containing cyclodipeptide synthase family.

The enzyme catalyses L-tryptophyl-tRNA(Trp) + L-arginyl-tRNA(Arg) = cyclo(L-arginyl-L-tryptophyl) + tRNA(Trp) + tRNA(Arg) + H(+). It participates in secondary metabolite biosynthesis. Arginine-containing cyclodipeptide synthase; part of the cluster that mediates the biosynthesis of a highly modified cyclo-arginine-tryptophan dipeptide (cRW). Within the pathway, avaA acts as the scaffold-generating enzyme and is responsible for formation of the cyclo-Arg-Trp diketopiperazine (cRW) from L-arginyl-tRNA(Arg) + L-tryptophanyl-tRNA(Trp). AvaB then acts as a multifunctional flavoenzyme that is responsible for generating the cyclo-Arg-formylkynurenine DKP, which can be deformylated by avaC. AvaB then catalyzes an additional N-oxidation followed by cyclization and dehydration. The next step is an N-acetylation of the guanidine group catalyzed by the arginine N-acetyltransferase AvaD. The role of the additional enzymes identified within the ava cluster still have to be determined. The protein is Arginine-containing cyclodipeptide synthase avaA of Aspergillus versicolor.